We begin with the raw amino-acid sequence, 229 residues long: CRISPR pre-crRNA endoribonuclease Cas5d (229 aa).

The protein belongs to the CRISPR-associated protein Cas5 family. Subtype I-C/Dvulg subfamily. It depends on Does not require a metal cofactor. as a cofactor.

Functionally, CRISPR (clustered regularly interspaced short palindromic repeat) is an adaptive immune system that provides protection against mobile genetic elements (viruses, transposable elements and conjugative plasmids). CRISPR clusters contain spacers, sequences complementary to antecedent mobile elements, and target invading nucleic acids. CRISPR clusters are transcribed and processed into CRISPR RNA (crRNA). This protein is a sequence-specific endonuclease that cleaves pre-crRNA into mature crRNA, possibly by an intramolecular attack of the 2'-hydroxyl group of G26 on the scissile phosphodiester, cutting the precursor 3' to G26 residue yielding 5'-hydroxyl and 2' and/or 3' ends lacking a hydroxyl group (perhaps a 2'/3' cyclic phosphodiester). Requires between 4 and 8 nt downstream of the cleavage site for both binding and cleavage of pre-crRNA. Substitution with dG at this position abolishes cleavage but not RNA binding. Does not cleave pre-crRNA associated with the M.succiniciproducens strain MBEL55E Cas5 protein (AC Q65TW5) CRISPR locus. This Thermus thermophilus (strain ATCC BAA-163 / DSM 7039 / HB27) protein is CRISPR pre-crRNA endoribonuclease Cas5d.